Reading from the N-terminus, the 230-residue chain is Broad specificity amino-acid racemase YgeA (230 aa).

Substrate is bound by residues M10, Q52, and 83-85 (TNT). The active-site Proton donor is T83. The Proton acceptor role is filled by C197. 198-199 (TE) lines the substrate pocket.

The protein belongs to the aspartate/glutamate racemases family.

It carries out the reaction an L-alpha-amino acid = a D-alpha-amino acid. It catalyses the reaction L-homoserine = D-homoserine. In terms of biological role, amino-acid racemase able to utilize a broad range of substrates. Highest activity is observed with L-homoserine and D-homoserine. Has tenfold lower activity against L-methionine, L-leucine, L-valine and L-histidine. Has low activity with L-norvaline, L-asparagine, D-methionine, L-aminobutyric acid, L-isoleucine, L-serine, L-norleucine, L-alanine, L-glutamine, LL-diaminopimelic acid and L-phenylalanine. Has no activity against ten L-amino acids (Thr, Glu, Asp, Arg, Lys, Tyr, Trp, Orn, Cit and Aad). D-amino acids might be used as components of peptidoglycan and/or be involved in peptidoglycan metabolism and remodeling. The polypeptide is Broad specificity amino-acid racemase YgeA (ygeA) (Escherichia coli (strain K12)).